A 529-amino-acid chain; its full sequence is MGILDGESKKARVGMERQDERLRSLSEANDRLMAKNHALAKALTRATQELTKAKAQLNQLAGPPMTFATMIRVHAANTDEQGVQHASAEVISGTRRMIVPVAANVQASRLEAGRTVLLNENMVIVDQHDTDTLGSVRTVRQVLDDGRLLVADSGGNVTLVRRAGTLAKENVNTGDRVSVDSSVRFALTLIPVEDDADLVLEETPDVTFDDIGGLDEQIERIRDAVQMPFLHRELFERYDLKPPKGVLLYGPPGNGKTLIAKAVANALAEGSGAGSGVFLSVKGPELLNKFVGESERLIRMIFRRARERAADGRPVIVFIDEMDSLLRTRGSGVSSDVETTIVPQFLSELDGVESLDNVMVIGASNRIDMIDPAVLRPGRLDVKIRVERPKAKQAEQIIRHYLTDDLPLTPGIEAKALTSVLVADIYAVSEHRHLCDVCDEHGQWSPVYLADVVSGAVLKNVVDRAKTKAVKISIESAEPAAIGVNLLAKAVQEEFEETRDAVLDADPVQWSRINGFEAGHVTRIRPTAQ.

A coiled-coil region spans residues 15-62; the sequence is MERQDERLRSLSEANDRLMAKNHALAKALTRATQELTKAKAQLNQLAG. 253–258 is a binding site for ATP; that stretch reads GNGKTL.

The protein belongs to the AAA ATPase family. As to quaternary structure, homohexamer. Assembles into a hexameric ring structure.

The sequence is that of AAA ATPase forming ring-shaped complexes from Bifidobacterium dentium (strain ATCC 27534 / DSM 20436 / JCM 1195 / Bd1).